Here is a 334-residue protein sequence, read N- to C-terminus: Ornithine carbamoyltransferase (334 aa).

Residues 56–59 (STRT), Q83, R107, and 134–137 (HPTQ) each bind carbamoyl phosphate. L-ornithine contacts are provided by residues N168, D232, and 236–237 (SM). Carbamoyl phosphate contacts are provided by residues 274–275 (CL) and R320.

Belongs to the aspartate/ornithine carbamoyltransferase superfamily. OTCase family.

The protein localises to the cytoplasm. The catalysed reaction is carbamoyl phosphate + L-ornithine = L-citrulline + phosphate + H(+). The protein operates within amino-acid biosynthesis; L-arginine biosynthesis; L-arginine from L-ornithine and carbamoyl phosphate: step 1/3. Functionally, reversibly catalyzes the transfer of the carbamoyl group from carbamoyl phosphate (CP) to the N(epsilon) atom of ornithine (ORN) to produce L-citrulline. The polypeptide is Ornithine carbamoyltransferase (Escherichia coli O45:K1 (strain S88 / ExPEC)).